The primary structure comprises 287 residues: Phosphatidylserine decarboxylase proenzyme (287 aa).

Catalysis depends on charge relay system; for autoendoproteolytic cleavage activity residues D89, H146, and S252. The Schiff-base intermediate with substrate; via pyruvic acid; for decarboxylase activity role is filled by S252. Position 252 is a pyruvic acid (Ser); by autocatalysis (S252).

Belongs to the phosphatidylserine decarboxylase family. PSD-B subfamily. Prokaryotic type I sub-subfamily. In terms of assembly, heterodimer of a large membrane-associated beta subunit and a small pyruvoyl-containing alpha subunit. Pyruvate serves as cofactor. Is synthesized initially as an inactive proenzyme. Formation of the active enzyme involves a self-maturation process in which the active site pyruvoyl group is generated from an internal serine residue via an autocatalytic post-translational modification. Two non-identical subunits are generated from the proenzyme in this reaction, and the pyruvate is formed at the N-terminus of the alpha chain, which is derived from the carboxyl end of the proenzyme. The autoendoproteolytic cleavage occurs by a canonical serine protease mechanism, in which the side chain hydroxyl group of the serine supplies its oxygen atom to form the C-terminus of the beta chain, while the remainder of the serine residue undergoes an oxidative deamination to produce ammonia and the pyruvoyl prosthetic group on the alpha chain. During this reaction, the Ser that is part of the protease active site of the proenzyme becomes the pyruvoyl prosthetic group, which constitutes an essential element of the active site of the mature decarboxylase.

The protein resides in the cell membrane. It carries out the reaction a 1,2-diacyl-sn-glycero-3-phospho-L-serine + H(+) = a 1,2-diacyl-sn-glycero-3-phosphoethanolamine + CO2. It functions in the pathway phospholipid metabolism; phosphatidylethanolamine biosynthesis; phosphatidylethanolamine from CDP-diacylglycerol: step 2/2. Functionally, catalyzes the formation of phosphatidylethanolamine (PtdEtn) from phosphatidylserine (PtdSer). This Shewanella sediminis (strain HAW-EB3) protein is Phosphatidylserine decarboxylase proenzyme.